We begin with the raw amino-acid sequence, 529 residues long: MGEQLSPDEKFQLITRNLQEVLGEERLKEILKERELKVYWGTATTGKPHVAYFVPMSKIADFLKAGCEVTILFADLHAYLDNMKAPWELLELRVKYYEQVIKAMLESIGVPLDKLKFVKGTDYQLSREYTLDVYRLSSMVTEHDAKKAGAEVVKQVEHPLLSGLLYPGLQALDEEYLKVDAQFGGVDQRKIFTLAEKYLPSLGYTKRSHLMNPMVPGLTGSKMSSSEEESKIDLLDKNQDVKKKLKKAFCEPGNVENNGVLSFVKHVLFPLHSEFVIKRDPKFGGDKVYTDFEEVEKDFAAEQIHPGDLKASVELALNKLLDPIRKKFESPELKKLTSSAYPEPSKNKGGVKGNPKQTTDDDEVIPSRLDIRVGKVISVEKHPDADSLYLEKIDVGEEQPRTVVSGLVAYITEEQLQDRLVVLLCNLKPQKMRGIESQAMVLCASIEGEPRKVEPLDPPEGSAAGDRVYVEGYESGKPDDELKPKKKVFEKLQVDLKISGEFVAQWKEQNLMTKLGRITCKTLKGGNIS.

Residue Tyr-39 coordinates L-tyrosine. The 'HIGH' region motif lies at 44 to 52 (TTGKPHVAY). L-tyrosine-binding residues include Tyr-166, Gln-170, Asp-173, and Gln-188. The 'KMSKS' region motif lies at 222-226 (KMSSS). A Nuclear localization signal motif is present at residues 242–247 (KKKLKK). The tract at residues 335–362 (KLTSSAYPEPSKNKGGVKGNPKQTTDDD) is disordered. Residues 365 to 469 (IPSRLDIRVG…EGSAAGDRVY (105 aa)) enclose the tRNA-binding domain.

Belongs to the class-I aminoacyl-tRNA synthetase family. Homodimer.

Its subcellular location is the cytoplasm. The protein resides in the nucleus. It catalyses the reaction tRNA(Tyr) + L-tyrosine + ATP = L-tyrosyl-tRNA(Tyr) + AMP + diphosphate + H(+). Its function is as follows. Catalyzes the attachment of tyrosine to tRNA(Tyr) in a two-step reaction: tyrosine is first activated by ATP to form Tyr-AMP and then transferred to the acceptor end of tRNA(Tyr). This is Tyrosine--tRNA ligase, cytoplasmic (yars1) from Danio rerio (Zebrafish).